A 136-amino-acid polypeptide reads, in one-letter code: NADH-ubiquinone oxidoreductase chain 3 (136 aa).

Helical transmembrane passes span 5–25 (TFFL…NLIF), 55–75 (ISFF…LLVY), and 85–105 (GIYG…GFAF).

It belongs to the complex I subunit 3 family.

Its subcellular location is the mitochondrion membrane. It catalyses the reaction a ubiquinone + NADH + 5 H(+)(in) = a ubiquinol + NAD(+) + 4 H(+)(out). Core subunit of the mitochondrial membrane respiratory chain NADH dehydrogenase (Complex I) that is believed to belong to the minimal assembly required for catalysis. Complex I functions in the transfer of electrons from NADH to the respiratory chain. The immediate electron acceptor for the enzyme is believed to be ubiquinone. This Emericella nidulans (Aspergillus nidulans) protein is NADH-ubiquinone oxidoreductase chain 3 (nd3).